Reading from the N-terminus, the 149-residue chain is Decarboxylase AgnL1 (149 aa).

The 96-residue stretch at 30–125 folds into the EthD domain; it reads PGMSEEDYRH…VGDHEKFADT (96 aa).

Belongs to the tpcK family.

The catalysed reaction is atrochrysone carboxylate + H(+) = atrochrysone + CO2. It participates in secondary metabolite biosynthesis. In terms of biological role, decarboxylase; part of the gene cluster that mediates the biosynthesis of agnestins, dihydroxy-xanthone metabolites. The pathway begins with the assembly and cyclization of atrochrysone thioester by the non-reducing polyketide synthase Agnpks1. The atrochrysone carboxyl ACP thioesterase AgnL7 then breaks the thioester bond and releases the atrochrysone carboxylic acid as the first enzyme-free intermediate. The decarboxylase AgnL1 then catalyzes the concerted decarboxylation-elimination required to convert atochrysone carboxylic acid into emodin anthrone, which is further oxidized to emodin by the anthrone oxygenase AgnL2. Emodin then undergoes reduction catalyzed by the oxidoreductase AgnL4 to yield the dihydroquinone tautomer which is the substrate for reduction by the short chain dehydrogenase AgnL6 reduction to produce hydroxyketone, followed by AgnL8 dehydration and likely spontaneous autoxidation to chrysophanol. Baeyer-Villiger oxidation by the oxidase AgnL3 leads to monodictyphenone via cleavage of the C-10/C-10a bond of chrysophanol. Alternative cleavage at the C-4a/C-10 bond of chrysophanol also leads to the formation some cephalone F. Further conversion to agnestins A and B, requires reduction to dihydro-monodictyphenone, oxidation to agnestin C probably via an epoxide, and rearrangement to either agnestin A or agnestin B directly, although agnestin A or agnestin B can also interconvert. Within the cluster, AgnR1 is the only unassigned oxidoreductase present which could be involved in this conversion. However, AgnR1 seems not to be involved in this step, and thus genes involved in the proposed oxidation/reduction may be located elsewhere on the genome. Further agnestin A derivatives are probably formed by spontaneous decarboxylations, dehydrations and methanolysis reactions. This is Decarboxylase AgnL1 from Paecilomyces divaricatus (Penicillium divaricatum).